A 150-amino-acid chain; its full sequence is Deoxyuridine 5'-triphosphate nucleotidohydrolase (150 aa).

Residues 70–72 (RSG), Asn82, 86–88 (LID), and Met96 each bind substrate.

This sequence belongs to the dUTPase family. Requires Mg(2+) as cofactor.

It carries out the reaction dUTP + H2O = dUMP + diphosphate + H(+). Its pathway is pyrimidine metabolism; dUMP biosynthesis; dUMP from dCTP (dUTP route): step 2/2. Its function is as follows. This enzyme is involved in nucleotide metabolism: it produces dUMP, the immediate precursor of thymidine nucleotides and it decreases the intracellular concentration of dUTP so that uracil cannot be incorporated into DNA. This Baumannia cicadellinicola subsp. Homalodisca coagulata protein is Deoxyuridine 5'-triphosphate nucleotidohydrolase.